The following is a 227-amino-acid chain: Cytochrome c biogenesis ATP-binding export protein CcmA (227 aa).

The ABC transporter domain occupies 26-227 (LAASGLGFSR…ARTLRLDARS (202 aa)). 58 to 65 (GANGSGKT) serves as a coordination point for ATP.

The protein belongs to the ABC transporter superfamily. CcmA exporter (TC 3.A.1.107) family. The complex is composed of two ATP-binding proteins (CcmA) and two transmembrane proteins (CcmB).

It localises to the cell inner membrane. The enzyme catalyses heme b(in) + ATP + H2O = heme b(out) + ADP + phosphate + H(+). Functionally, part of the ABC transporter complex CcmAB involved in the biogenesis of c-type cytochromes; once thought to export heme, this seems not to be the case, but its exact role is uncertain. Responsible for energy coupling to the transport system. The chain is Cytochrome c biogenesis ATP-binding export protein CcmA from Cupriavidus necator (strain ATCC 17699 / DSM 428 / KCTC 22496 / NCIMB 10442 / H16 / Stanier 337) (Ralstonia eutropha).